We begin with the raw amino-acid sequence, 663 residues long: Nuclear receptor-binding protein homolog (663 aa).

The segment covering M1–A14 has biased composition (low complexity). The segment at M1–E112 is disordered. Residues L19–I46 are compositionally biased toward polar residues. 2 stretches are compositionally biased toward low complexity: residues P47 to P57 and V81 to S94. Acidic residues predominate over residues D101 to E111. A Protein kinase domain is found at R122–L392. Disordered stretches follow at residues P481–D505 and Y638–N663. Phosphoserine is present on residues S489, S495, and S498. T500 carries the phosphothreonine modification. Residues Q641–E652 are compositionally biased toward low complexity.

Belongs to the protein kinase superfamily. Ser/Thr protein kinase family.

The protein resides in the cytoplasm. It is found in the cell cortex. May play a role in subcellular trafficking between the endoplasmic reticulum and Golgi apparatus. This chain is Nuclear receptor-binding protein homolog, found in Drosophila pseudoobscura pseudoobscura (Fruit fly).